The sequence spans 361 residues: Probable dual-specificity RNA methyltransferase RlmN (361 aa).

Glu91 serves as the catalytic Proton acceptor. The 239-residue stretch at 97-335 (QHYGLSVCVT…CVVRQEHGTD (239 aa)) folds into the Radical SAM core domain. The cysteines at positions 104 and 340 are disulfide-linked. 3 residues coordinate [4Fe-4S] cluster: Cys111, Cys115, and Cys118. S-adenosyl-L-methionine is bound by residues 163-164 (GE), Ser195, 218-220 (SLH), and Asn296. The active-site S-methylcysteine intermediate is Cys340.

It belongs to the radical SAM superfamily. RlmN family. [4Fe-4S] cluster serves as cofactor.

It localises to the cytoplasm. It carries out the reaction adenosine(2503) in 23S rRNA + 2 reduced [2Fe-2S]-[ferredoxin] + 2 S-adenosyl-L-methionine = 2-methyladenosine(2503) in 23S rRNA + 5'-deoxyadenosine + L-methionine + 2 oxidized [2Fe-2S]-[ferredoxin] + S-adenosyl-L-homocysteine. The catalysed reaction is adenosine(37) in tRNA + 2 reduced [2Fe-2S]-[ferredoxin] + 2 S-adenosyl-L-methionine = 2-methyladenosine(37) in tRNA + 5'-deoxyadenosine + L-methionine + 2 oxidized [2Fe-2S]-[ferredoxin] + S-adenosyl-L-homocysteine. Functionally, specifically methylates position 2 of adenine 2503 in 23S rRNA and position 2 of adenine 37 in tRNAs. In Streptococcus mutans serotype c (strain ATCC 700610 / UA159), this protein is Probable dual-specificity RNA methyltransferase RlmN.